Reading from the N-terminus, the 1444-residue chain is DNA polymerase III PolC-type (1444 aa).

Residues tyrosine 428 to alanine 584 form the Exonuclease domain.

The protein belongs to the DNA polymerase type-C family. PolC subfamily.

Its subcellular location is the cytoplasm. The catalysed reaction is DNA(n) + a 2'-deoxyribonucleoside 5'-triphosphate = DNA(n+1) + diphosphate. Functionally, required for replicative DNA synthesis. This DNA polymerase also exhibits 3' to 5' exonuclease activity. This Listeria monocytogenes serovar 1/2a (strain ATCC BAA-679 / EGD-e) protein is DNA polymerase III PolC-type.